The primary structure comprises 177 residues: ATP synthase subunit delta (177 aa).

This sequence belongs to the ATPase delta chain family. In terms of assembly, F-type ATPases have 2 components, F(1) - the catalytic core - and F(0) - the membrane proton channel. F(1) has five subunits: alpha(3), beta(3), gamma(1), delta(1), epsilon(1). F(0) has three main subunits: a(1), b(2) and c(10-14). The alpha and beta chains form an alternating ring which encloses part of the gamma chain. F(1) is attached to F(0) by a central stalk formed by the gamma and epsilon chains, while a peripheral stalk is formed by the delta and b chains.

Its subcellular location is the cell inner membrane. Its function is as follows. F(1)F(0) ATP synthase produces ATP from ADP in the presence of a proton or sodium gradient. F-type ATPases consist of two structural domains, F(1) containing the extramembraneous catalytic core and F(0) containing the membrane proton channel, linked together by a central stalk and a peripheral stalk. During catalysis, ATP synthesis in the catalytic domain of F(1) is coupled via a rotary mechanism of the central stalk subunits to proton translocation. In terms of biological role, this protein is part of the stalk that links CF(0) to CF(1). It either transmits conformational changes from CF(0) to CF(1) or is implicated in proton conduction. In Edwardsiella ictaluri (strain 93-146), this protein is ATP synthase subunit delta.